Here is a 130-residue protein sequence, read N- to C-terminus: Ribosome biogenesis inhibitor MINAS-60 (130 aa).

The tract at residues 61-130 is disordered; the sequence is SRVRRIPTRP…RRRRPVTSSC (70 aa). The span at 109–130 shows a compositional bias: basic residues; sequence KGRRRRRRRMRRRRRRPVTSSC.

In terms of assembly, interacts with 60S ribosome assembly factors GTPBP4 and MRTO4.

It is found in the nucleus. The protein localises to the nucleolus. Its function is as follows. Acts as a late-stage inhibitor of pre-60S ribosome assembly by preventing pre-60S ribosome export from nucleus. This is Ribosome biogenesis inhibitor MINAS-60 from Homo sapiens (Human).